Consider the following 396-residue polypeptide: tRNA(Met) cytidine acetate ligase (396 aa).

Residues 9–22 (IVEY…HLHH), glycine 103, asparagine 154, and arginine 179 contribute to the ATP site.

It belongs to the TmcAL family.

The protein resides in the cytoplasm. The catalysed reaction is cytidine(34) in elongator tRNA(Met) + acetate + ATP = N(4)-acetylcytidine(34) in elongator tRNA(Met) + AMP + diphosphate. Functionally, catalyzes the formation of N(4)-acetylcytidine (ac(4)C) at the wobble position of elongator tRNA(Met), using acetate and ATP as substrates. First activates an acetate ion to form acetyladenylate (Ac-AMP) and then transfers the acetyl group to tRNA to form ac(4)C34. This is tRNA(Met) cytidine acetate ligase from Fusobacterium nucleatum subsp. nucleatum (strain ATCC 25586 / DSM 15643 / BCRC 10681 / CIP 101130 / JCM 8532 / KCTC 2640 / LMG 13131 / VPI 4355).